The following is a 697-amino-acid chain: Portal protein (697 aa).

A disordered region spans residues 633-697 (MSREAAGGVP…RRAGGPYGFH (65 aa)). Over residues 664 to 689 (ITADEERRGPERVGRFRNGGPDDPRR) the composition is skewed to basic and acidic residues.

It belongs to the herpesviridae portal protein family. As to quaternary structure, homododecamerizes. Interacts with terminase subunits TRM1 and TRM3.

The protein localises to the virion. It is found in the host nucleus. Functionally, forms a portal in the viral capsid through which viral DNA is translocated during DNA packaging. Assembles as a dodecamer at a single fivefold axe of the T=16 icosahedric capsid. Binds to the molecular motor that translocates the viral DNA, termed terminase. This chain is Portal protein (UL104), found in Homo sapiens (Human).